Reading from the N-terminus, the 930-residue chain is GPI ethanolamine phosphate transferase 1 (930 aa).

Topologically, residues 1 to 8 (MARLGRTG) are cytoplasmic. A helical transmembrane segment spans residues 9–29 (FLTLAVVFHLIYAYSIFDIYF). Residues 30-466 (VSPIVSGMRP…LQTYDWLFLR (437 aa)) are Lumenal-facing. An N-linked (GlcNAc...) asparagine glycan is attached at asparagine 148. Residues 467 to 487 (TIVTFGYVGWIAYALTTVIHL) traverse the membrane as a helical segment. Residues 488 to 498 (HVLHGASESDR) lie on the Cytoplasmic side of the membrane. Residues 499–519 (TTASISFFSSVLVALFSVFLY) form a helical membrane-spanning segment. At 520-521 (QG) the chain is on the lumenal side. A helical membrane pass occupies residues 522–542 (SPWRYYLYGFFPIFFWEEVFA). The Cytoplasmic segment spans residues 543–569 (RRKAFHAGRAGALLLPKRDLHSNKVED). Residues 570–590 (IDTITYGGAFMLLTGLLYLLF) form a helical membrane-spanning segment. At 591-611 (EDEILGTSHQPAAVSRKGSRN) the chain is on the lumenal side. Residues 612–632 (IMGLQLGMVLLALIVTRSSAA) traverse the membrane as a helical segment. The Cytoplasmic portion of the chain corresponds to 633 to 639 (SLQAKQG). Residues 640 to 660 (LPFGNQVVGWGVLIASLLLPF) traverse the membrane as a helical segment. Residues 661–684 (AHRLYPNSHYLHRLMIIFLTFSPT) are Lumenal-facing. The helical transmembrane segment at 685 to 705 (FIILTISYEGLFYFAFCMTLV) threads the bilayer. The Cytoplasmic portion of the chain corresponds to 706–761 (TWVRLEHATYVYTAKPVAKQAQETIEPPKKANPGATTVVDGETYRFRTLTVSDARV). Residues 762–782 (ALFFFFLLQSAFFSTGNIASI) form a helical membrane-spanning segment. Over 783-803 (SSFSLDSVYRLIPVFNPFSQG) the chain is Lumenal. Residues 804-824 (ALLILKLLIPFAIISANLGIL) form a helical membrane-spanning segment. Over 825–833 (NRRLEVAPS) the chain is Cytoplasmic. The helical transmembrane segment at 834–854 (ALFMVVMAISDVMTLNFFYMV) threads the bilayer. Over 855-870 (RDEGSWLDIGTTISHF) the chain is Lumenal. Residues 871–891 (CIASFLCTFVAGLEFLSEVFI) traverse the membrane as a helical segment. The Cytoplasmic portion of the chain corresponds to 892 to 930 (SGVDFGLRTDAITASVPDIVNGITSKGQKDVPNGVEDKE).

The protein belongs to the PIGG/PIGN/PIGO family. PIGN subfamily.

Its subcellular location is the endoplasmic reticulum membrane. It participates in glycolipid biosynthesis; glycosylphosphatidylinositol-anchor biosynthesis. Ethanolamine phosphate transferase involved in glycosylphosphatidylinositol-anchor biosynthesis. Transfers ethanolamine phosphate to the first alpha-1,4-linked mannose of the glycosylphosphatidylinositol precursor of GPI-anchor. This is GPI ethanolamine phosphate transferase 1 (mcd4) from Emericella nidulans (strain FGSC A4 / ATCC 38163 / CBS 112.46 / NRRL 194 / M139) (Aspergillus nidulans).